Here is a 466-residue protein sequence, read N- to C-terminus: Light-independent protochlorophyllide reductase subunit N (466 aa).

Residues cysteine 23, cysteine 48, and cysteine 108 each contribute to the [4Fe-4S] cluster site.

The protein belongs to the BchN/ChlN family. In terms of assembly, protochlorophyllide reductase is composed of three subunits; ChlL, ChlN and ChlB. Forms a heterotetramer of two ChlB and two ChlN subunits. It depends on [4Fe-4S] cluster as a cofactor.

The catalysed reaction is chlorophyllide a + oxidized 2[4Fe-4S]-[ferredoxin] + 2 ADP + 2 phosphate = protochlorophyllide a + reduced 2[4Fe-4S]-[ferredoxin] + 2 ATP + 2 H2O. Its pathway is porphyrin-containing compound metabolism; chlorophyll biosynthesis (light-independent). Its function is as follows. Component of the dark-operative protochlorophyllide reductase (DPOR) that uses Mg-ATP and reduced ferredoxin to reduce ring D of protochlorophyllide (Pchlide) to form chlorophyllide a (Chlide). This reaction is light-independent. The NB-protein (ChlN-ChlB) is the catalytic component of the complex. This Synechococcus elongatus (strain ATCC 33912 / PCC 7942 / FACHB-805) (Anacystis nidulans R2) protein is Light-independent protochlorophyllide reductase subunit N.